The sequence spans 342 residues: L-lysine 2,3-aminomutase (342 aa).

Residues 106–329 form the Radical SAM core domain; the sequence is HKYQNRALLL…PRLAREIGGE (224 aa). The [4Fe-4S] cluster site is built by Cys-120, Cys-124, and Cys-127. Residue Lys-332 is modified to N6-(pyridoxal phosphate)lysine.

It belongs to the radical SAM superfamily. KamA family. It depends on [4Fe-4S] cluster as a cofactor. The cofactor is pyridoxal 5'-phosphate.

The catalysed reaction is L-lysine = D-beta-lysine. With EpmA is involved in the beta-lysylation step of the post-translational modification of translation elongation factor P (EF-P) on 'Lys-34'. EpmB appears to act before EpmA. Displays lysine 2,3-aminomutase activity, producing (R)-beta-lysine from (S)-alpha-lysine (L-lysine). The chain is L-lysine 2,3-aminomutase (epmB) from Salmonella typhimurium (strain LT2 / SGSC1412 / ATCC 700720).